The sequence spans 618 residues: Glycine--tRNA ligase 2 (618 aa).

Glu187 provides a ligand contact to glycine. ATP contacts are provided by residues 219–221 (RNE) and 230–231 (RV). Glu238 serves as a coordination point for glycine. 347-348 (EC) lines the ATP pocket. 466–468 (EPS) lines the glycine pocket. ATP is bound at residue Arg473.

It belongs to the class-II aminoacyl-tRNA synthetase family. As to quaternary structure, homodimer.

The protein localises to the cytoplasm. The catalysed reaction is tRNA(Gly) + glycine + ATP = glycyl-tRNA(Gly) + AMP + diphosphate. It carries out the reaction 2 ATP + H(+) = P(1),P(4)-bis(5'-adenosyl) tetraphosphate + diphosphate. Functionally, catalyzes the ATP-dependent ligation of glycine to the 3'-end of its cognate tRNA, via the formation of an aminoacyl-adenylate intermediate (Gly-AMP). Also produces diadenosine tetraphosphate (Ap4A), a universal pleiotropic signaling molecule needed for cell regulation pathways, by direct condensation of 2 ATPs. Thereby, may play a special role in Ap4A homeostasis. The protein is Glycine--tRNA ligase 2 (GRS2) of Saccharomyces cerevisiae (strain ATCC 204508 / S288c) (Baker's yeast).